A 234-amino-acid polypeptide reads, in one-letter code: MDIKLKDFEGPLDLLLHLVSQYKVDIYEVPIVEVIEQYLNYIETLQVMKLEVAGDYMLMASQLMLIKSRRLLPKVVEHIEEEDLEQDLLEKIEEYSRFKAVSQALAKQHDQRAKWYSKPKQELIFEDAILQEDKTVMDLFLAFSNIMAAKRAVLKTNHTVIERDDYKIEDMMASIKQRLEKENVISLSAIFEECQTLNEVISIFLASLELIKLHVVFVEQLSNFGAIILRKEKK.

This sequence belongs to the ScpA family. Component of a cohesin-like complex composed of ScpA, ScpB and the Smc homodimer, in which ScpA and ScpB bind to the head domain of Smc. The presence of the three proteins is required for the association of the complex with DNA.

It localises to the cytoplasm. Participates in chromosomal partition during cell division. May act via the formation of a condensin-like complex containing Smc and ScpB that pull DNA away from mid-cell into both cell halves. This chain is Segregation and condensation protein A, found in Streptococcus pyogenes serotype M12 (strain MGAS2096).